The following is a 106-amino-acid chain: Cell division protein FtsB (106 aa).

Over 1–3 (MGK) the chain is Cytoplasmic. Residues 4–21 (LTLLLLALLGWLQYSLWL) form a helical membrane-spanning segment. Over 22–106 (GKNGVHDYVR…ASSSQNNLQK (85 aa)) the chain is Periplasmic. Residues 40–62 (QGSNAKLKARNDQLFAEIDDLNG) are a coiled coil.

Belongs to the FtsB family. In terms of assembly, part of a complex composed of FtsB, FtsL and FtsQ.

The protein localises to the cell inner membrane. Functionally, essential cell division protein. May link together the upstream cell division proteins, which are predominantly cytoplasmic, with the downstream cell division proteins, which are predominantly periplasmic. This Serratia proteamaculans (strain 568) protein is Cell division protein FtsB.